A 206-amino-acid chain; its full sequence is Superoxide dismutase [Mn] (206 aa).

The Mn(2+) site is built by H30, H78, D166, and H170.

It belongs to the iron/manganese superoxide dismutase family. Homodimer. Requires Mn(2+) as cofactor.

It catalyses the reaction 2 superoxide + 2 H(+) = H2O2 + O2. Functionally, destroys superoxide anion radicals which are normally produced within the cells and which are toxic to biological systems. This is Superoxide dismutase [Mn] (sodA) from Chlamydia trachomatis serovar D (strain ATCC VR-885 / DSM 19411 / UW-3/Cx).